The following is a 366-amino-acid chain: tRNA(Met) cytidine acetate ligase (366 aa).

ATP contacts are provided by residues I7 to L20, G96, N152, and R175.

It belongs to the TmcAL family.

The protein resides in the cytoplasm. The enzyme catalyses cytidine(34) in elongator tRNA(Met) + acetate + ATP = N(4)-acetylcytidine(34) in elongator tRNA(Met) + AMP + diphosphate. In terms of biological role, catalyzes the formation of N(4)-acetylcytidine (ac(4)C) at the wobble position of elongator tRNA(Met), using acetate and ATP as substrates. First activates an acetate ion to form acetyladenylate (Ac-AMP) and then transfers the acetyl group to tRNA to form ac(4)C34. This Streptococcus mutans serotype c (strain ATCC 700610 / UA159) protein is tRNA(Met) cytidine acetate ligase.